The chain runs to 1556 residues: Ubiquitin carboxyl-terminal hydrolase 47 (1556 aa).

The disordered stretch occupies residues 117-231 (MKSDGEKAKS…AKKTAKVTSK (115 aa)). Residues 146–156 (ASGSSSPSKAK) are compositionally biased toward low complexity. A phosphoserine mark is found at serine 172 and serine 173. The span at 180-189 (IKTTAAKISK) shows a compositional bias: low complexity. Positions 191-200 (GSEKAPRASP) are enriched in basic and acidic residues. Residues 208-219 (TEINSKNTSSES) are compositionally biased toward polar residues. The residue at position 238 (serine 238) is a Phosphoserine. In terms of domain architecture, USP spans 396 to 779 (VGLVNQAMTC…NAYMLMYRQV (384 aa)). Cysteine 405 functions as the Nucleophile in the catalytic mechanism. 2 stretches are compositionally biased toward polar residues: residues 628-642 (NRSG…QLNG) and 661-673 (LSSG…SSSQ). Residues 628–697 (NRSGNSGEQN…SSSTSKSAKQ (70 aa)) are disordered. The segment covering 688–697 (SSSTSKSAKQ) has biased composition (low complexity). The active-site Proton acceptor is histidine 720. The segment at 1087 to 1148 (EPMSQPSPSH…LSSPEDEAAS (62 aa)) is disordered. The segment covering 1109–1125 (DGDRTLVETDNMAHRGG) has biased composition (basic and acidic residues). Low complexity predominate over residues 1128–1141 (SQVSSTSHSPQLSS). 7 positions are modified to phosphoserine: serine 1131, serine 1132, serine 1140, serine 1141, serine 1199, serine 1201, and serine 1205.

This sequence belongs to the peptidase C19 family. In terms of assembly, interacts with ttk.

It localises to the nucleus. It catalyses the reaction Thiol-dependent hydrolysis of ester, thioester, amide, peptide and isopeptide bonds formed by the C-terminal Gly of ubiquitin (a 76-residue protein attached to proteins as an intracellular targeting signal).. In terms of biological role, ubiquitin-specific protease that deubiquitinates target proteins to regulate different cellular and developmental pathways. Functions downstream of Dsor1/MEK to positively regulate the Ras/MAPK signaling pathway. Likely to modulate the pathway during various cellular and developmental processes including rl/MAPK activation by the receptors InR, Egfr and sevenless/sev. Functions in the post-translational stabilization of rl/MAPK levels in a mechanism that is independent of rl activity and opposes the activity of the E2 enzyme Unc6 and the putative E3 ligases poe, Ufd4 and Kcmf1, which mediate the ubiquitination and proteasomal degradation of rl. During eye development it may also act downstream of rl/MAPK to negatively regulate the Ras/MAPK signaling pathway by stabilizing the transcriptional repressor ttk and consequently inhibiting photoreceptor cell development. This suggests that at least during eye development, it may act in both the positive and negative regulation of the Ras/MAPK signaling pathway to mediate the development of different cell types. Positively regulates border follicle cell migration during oogenesis by mediating the deubiquitination and stabilization of slbo. In the wing disks it positively regulates wg signaling by stabilizing arm. Has an effect on position-effect variegation. The sequence is that of Ubiquitin carboxyl-terminal hydrolase 47 from Drosophila melanogaster (Fruit fly).